A 601-amino-acid polypeptide reads, in one-letter code: Elongation factor 4 (601 aa).

The tr-type G domain maps to 7-189 (SHIRNFSIIA…SIVQLVPPPQ (183 aa)). GTP is bound by residues 19 to 24 (DHGKST) and 136 to 139 (NKID).

Belongs to the TRAFAC class translation factor GTPase superfamily. Classic translation factor GTPase family. LepA subfamily.

The protein resides in the cell inner membrane. The enzyme catalyses GTP + H2O = GDP + phosphate + H(+). Required for accurate and efficient protein synthesis under certain stress conditions. May act as a fidelity factor of the translation reaction, by catalyzing a one-codon backward translocation of tRNAs on improperly translocated ribosomes. Back-translocation proceeds from a post-translocation (POST) complex to a pre-translocation (PRE) complex, thus giving elongation factor G a second chance to translocate the tRNAs correctly. Binds to ribosomes in a GTP-dependent manner. This chain is Elongation factor 4, found in Trichodesmium erythraeum (strain IMS101).